A 301-amino-acid polypeptide reads, in one-letter code: Ornithine carbamoyltransferase (301 aa).

Carbamoyl phosphate contacts are provided by residues Arg-107 and 134–137; that span reads HPLQ. L-ornithine contacts are provided by residues Asn-165, Asp-220, and 224–225; that span reads SM. Carbamoyl phosphate is bound by residues 260-261 and Arg-288; that span reads CL.

Belongs to the aspartate/ornithine carbamoyltransferase superfamily. OTCase family. In terms of assembly, homotrimer.

It is found in the cytoplasm. It catalyses the reaction carbamoyl phosphate + L-ornithine = L-citrulline + phosphate + H(+). The protein operates within amino-acid biosynthesis; L-arginine biosynthesis; L-arginine from L-ornithine and carbamoyl phosphate: step 1/3. Its activity is regulated as follows. Inhibited by delta-N-phosphonoacetyl-L-ornithine. In terms of biological role, reversibly catalyzes the transfer of the carbamoyl group from carbamoyl phosphate (CP) to the N(epsilon) atom of ornithine (ORN) to produce L-citrulline, which is a substrate for argininosuccinate synthetase, the enzyme involved in the final step in arginine biosynthesis. The polypeptide is Ornithine carbamoyltransferase (Thermus thermophilus (strain ATCC BAA-163 / DSM 7039 / HB27)).